A 228-amino-acid chain; its full sequence is MYSIVAEESGLLPRERLLQKGAEVLSDQELLAIVLRTGTRSESVLSMANRILKGMTSLADLSRLSLNELQKIPGIGRVKSIELKAMVELAKRIEKAELARSEQIMSSQQVARRMMLDIGDKPQEHLVAIYLDTQNRIIQQKTVFIGGVRRSIAEPREILHYACHLMATSLIVVHNHPSGEAYPSRNDIDFTQKIKRSCDDLGICLLDHLIVGKSTYYSFREEREDFEL.

Residues 103–225 enclose the MPN domain; sequence QIMSSQQVAR…YYSFREERED (123 aa). Residues H174, H176, and D187 each coordinate Zn(2+). The JAMM motif signature appears at 174–187; that stretch reads HNHPSGEAYPSRND.

The protein belongs to the UPF0758 family.

The sequence is that of UPF0758 protein STER_1430 from Streptococcus thermophilus (strain ATCC BAA-491 / LMD-9).